The chain runs to 500 residues: Perfringolysin O (500 aa).

Positions 1–28 (MIRFKKTKLIASIAMALCLFSQPVISFS) are cleaved as a signal peptide. Beta stranded transmembrane passes span 189–202 (KSQISSALNVNAKV), 209–218 (VDFNAVANNE), 287–296 (SKDVQAAFKA), and 304–316 (KNSQQYKDIYENS). Residues 458–468 (ECTGLAWEWWR) carry the Conserved undecapeptide motif. A Cholesterol binding motif is present at residues 490–491 (TL).

This sequence belongs to the cholesterol-dependent cytolysin family. Modeling based on cryo-EM shows a homooligomeric pore complex containing 38-44 subunits; when inserted in the host membrane.

The protein resides in the secreted. It localises to the host cell membrane. Functionally, a cholesterol-dependent toxin that causes cytolysis by forming pores in cholesterol-containing host membranes. After binding to target membranes, the protein assembles into a pre-pore complex. A major conformational change leads to insertion in the host membrane and formation of an oligomeric pore complex. Cholesterol is required for binding to host cell membranes, membrane insertion and pore formation; cholesterol binding is mediated by a Thr-Leu pair in the C-terminus. Can be reversibly inactivated by oxidation. The sequence is that of Perfringolysin O (pfo) from Clostridium perfringens (strain 13 / Type A).